A 424-amino-acid chain; its full sequence is UPF0053 protein MG146 homolog (424 aa).

A CNNM transmembrane domain is found at S6–D191. A run of 4 helical transmembrane segments spans residues G7–V27, L71–L91, A101–I121, and L135–L155. CBS domains are found at residues M210 to F270 and L275 to E335.

Belongs to the UPF0053 family.

Its subcellular location is the cell membrane. The polypeptide is UPF0053 protein MG146 homolog (Mycoplasma pneumoniae (strain ATCC 29342 / M129 / Subtype 1) (Mycoplasmoides pneumoniae)).